A 520-amino-acid chain; its full sequence is Cytochrome P450 4F2 (520 aa).

Residues 1–4 (MSQL) constitute a propeptide that is removed on maturation. Residues Glu328 and Cys468 each coordinate heme.

Belongs to the cytochrome P450 family. Heme serves as cofactor. In terms of tissue distribution, liver. Also present in kidney: specifically expressed in the S2 and S3 segments of proximal tubules in cortex and outer medulla.

It is found in the microsome membrane. The protein localises to the endoplasmic reticulum membrane. It carries out the reaction an organic molecule + reduced [NADPH--hemoprotein reductase] + O2 = an alcohol + oxidized [NADPH--hemoprotein reductase] + H2O + H(+). The enzyme catalyses (5Z,8Z,11Z,14Z)-eicosatetraenoate + reduced [NADPH--hemoprotein reductase] + O2 = 20-hydroxy-(5Z,8Z,11Z,14Z)-eicosatetraenoate + oxidized [NADPH--hemoprotein reductase] + H2O + H(+). The catalysed reaction is (5Z,8Z,11Z)-eicosatrienoate + reduced [NADPH--hemoprotein reductase] + O2 = 20-hydroxy-(5Z,8Z,11Z)-eicosatrienoate + oxidized [NADPH--hemoprotein reductase] + H2O + H(+). It catalyses the reaction (5Z,8Z,11Z,14Z,17Z)-eicosapentaenoate + reduced [NADPH--hemoprotein reductase] + O2 = 20-hydroxy-(5Z,8Z,11Z,14Z,17Z)-eicosapentaenoate + oxidized [NADPH--hemoprotein reductase] + H2O + H(+). It carries out the reaction (4Z,7Z,10Z,13Z,16Z,19Z)-docosahexaenoate + reduced [NADPH--hemoprotein reductase] + O2 = 22-hydroxy-(4Z,7Z,10Z,13Z,16Z,19Z)-docosahexaenoate + oxidized [NADPH--hemoprotein reductase] + H2O + H(+). The enzyme catalyses 8,9-epoxy-(5Z,11Z,14Z)-eicosatrienoate + reduced [NADPH--hemoprotein reductase] + O2 = 20-hydroxy-8,9-epoxy-(5Z,11Z,14Z)-eicosatrienoate + oxidized [NADPH--hemoprotein reductase] + H2O + H(+). The catalysed reaction is (9S,10R)-epoxy-octadecanoate + reduced [NADPH--hemoprotein reductase] + O2 = 18-hydroxy-(9S,10R)-epoxy-octadecanoate + oxidized [NADPH--hemoprotein reductase] + H2O + H(+). It catalyses the reaction (9R,10S)-epoxy-octadecanoate + reduced [NADPH--hemoprotein reductase] + O2 = 18-hydroxy-(9R,10S)-epoxy-octadecanoate + oxidized [NADPH--hemoprotein reductase] + H2O + H(+). It carries out the reaction 12,13-epoxy-(9Z)-octadecenoate + reduced [NADPH--hemoprotein reductase] + O2 = 18-hydroxy-12,13-epoxy-(9Z)-octadecenoate + oxidized [NADPH--hemoprotein reductase] + H2O + H(+). The enzyme catalyses 9,10-epoxy-(12Z)-octadecenoate + reduced [NADPH--hemoprotein reductase] + O2 = 18-hydroxy-9,10-epoxy-(12Z)-octadecenoate + oxidized [NADPH--hemoprotein reductase] + H2O + H(+). The catalysed reaction is 8-hydroxy-(5Z,9E,11Z,14Z)-eicosatetraenoate + reduced [NADPH--hemoprotein reductase] + O2 = 8,20-dihydroxy-(5Z,9E,11Z,14Z)-eicosatetraenoate + oxidized [NADPH--hemoprotein reductase] + H2O + H(+). It catalyses the reaction 12-hydroxy-(5Z,8Z,10E,14Z)-eicosatetraenoate + reduced [NADPH--hemoprotein reductase] + O2 = 12,20-dihydroxy-(5Z,8Z,10E,14Z)-eicosatetraenoate + oxidized [NADPH--hemoprotein reductase] + H2O + H(+). It carries out the reaction 12-hydroxyoctadecanoate + reduced [NADPH--hemoprotein reductase] + O2 = 12,18-dihydroxyoctadecanoate + oxidized [NADPH--hemoprotein reductase] + H2O + H(+). The enzyme catalyses docosanoate + reduced [NADPH--hemoprotein reductase] + O2 = 22-hydroxydocosanoate + oxidized [NADPH--hemoprotein reductase] + H2O + H(+). The catalysed reaction is 22-hydroxydocosanoate + reduced [NADPH--hemoprotein reductase] + O2 = 22-oxodocosanoate + oxidized [NADPH--hemoprotein reductase] + 2 H2O + H(+). It catalyses the reaction 22-oxodocosanoate + reduced [NADPH--hemoprotein reductase] + O2 = docosanedioate + oxidized [NADPH--hemoprotein reductase] + H2O + 2 H(+). It carries out the reaction tetracosanoate + reduced [NADPH--hemoprotein reductase] + O2 = 24-hydroxytetracosanoate + oxidized [NADPH--hemoprotein reductase] + H2O + H(+). The enzyme catalyses hexacosanoate + reduced [NADPH--hemoprotein reductase] + O2 = 26-hydroxyhexacosanoate + oxidized [NADPH--hemoprotein reductase] + H2O + H(+). The catalysed reaction is 26-hydroxyhexacosanoate + reduced [NADPH--hemoprotein reductase] + O2 = 26-oxohexacosanoate + oxidized [NADPH--hemoprotein reductase] + 2 H2O + H(+). It catalyses the reaction 26-oxohexacosanoate + reduced [NADPH--hemoprotein reductase] + O2 = hexacosanedioate + oxidized [NADPH--hemoprotein reductase] + H2O + 2 H(+). It carries out the reaction 3-hydroxyoctadecanoate + reduced [NADPH--hemoprotein reductase] + O2 = 3,18-dihydroxyoctadecanoate + oxidized [NADPH--hemoprotein reductase] + H2O + H(+). The enzyme catalyses 3-hydroxyhexadecanoate + reduced [NADPH--hemoprotein reductase] + O2 = 3,16-dihydroxyhexadecanoate + oxidized [NADPH--hemoprotein reductase] + H2O + H(+). The catalysed reaction is leukotriene B4 + reduced [NADPH--hemoprotein reductase] + O2 = 20-hydroxy-leukotriene B4 + oxidized [NADPH--hemoprotein reductase] + H2O + H(+). It catalyses the reaction 6-trans-leukotriene B4 + reduced [NADPH--hemoprotein reductase] + O2 = 20-hydroxy-6-trans-leukotriene B4 + oxidized [NADPH--hemoprotein reductase] + H2O + H(+). It carries out the reaction lipoxin A4 + reduced [NADPH--hemoprotein reductase] + O2 = 20-hydroxy-lipoxin A4 + oxidized [NADPH--hemoprotein reductase] + H2O + H(+). The enzyme catalyses menaquinone-4 + reduced [NADPH--hemoprotein reductase] + O2 = omega-hydroxymenaquinone-4 + oxidized [NADPH--hemoprotein reductase] + H2O + H(+). The catalysed reaction is phylloquinone + reduced [NADPH--hemoprotein reductase] + O2 = omega-hydroxyphylloquinone + oxidized [NADPH--hemoprotein reductase] + H2O + H(+). It catalyses the reaction (+)-alpha-tocopherol + reduced [NADPH--hemoprotein reductase] + O2 = 13-hydroxy-alpha-tocopherol + oxidized [NADPH--hemoprotein reductase] + H2O + H(+). It carries out the reaction gamma-tocopherol + NADPH + O2 + H(+) = 13-hydroxy-gamma-tocopherol + NADP(+) + H2O. The protein operates within lipid metabolism; arachidonate metabolism. It participates in lipid metabolism; leukotriene B4 degradation. It functions in the pathway cofactor degradation; phylloquinone degradation. Inhibited by dietary sesamin. In terms of biological role, a cytochrome P450 monooxygenase involved in the metabolism of various endogenous substrates, including fatty acids, eicosanoids and vitamins. Mechanistically, uses molecular oxygen inserting one oxygen atom into a substrate, and reducing the second into a water molecule, with two electrons provided by NADPH via cytochrome P450 reductase (CPR; NADPH-ferrihemoprotein reductase). Catalyzes predominantly the oxidation of the terminal carbon (omega-oxidation) of long- and very long-chain fatty acids. Displays high omega-hydroxylase activity toward polyunsaturated fatty acids (PUFAs). Participates in the conversion of arachidonic acid to omega-hydroxyeicosatetraenoic acid (20-HETE), a signaling molecule acting both as vasoconstrictive and natriuretic with overall effect on arterial blood pressure. Plays a role in the oxidative inactivation of eicosanoids, including both pro-inflammatory and anti-inflammatory mediators such as leukotriene B4 (LTB4), lipoxin A4 (LXA4), and several HETEs. Catalyzes omega-hydroxylation of 3-hydroxy fatty acids. Converts monoepoxides of linoleic acid leukotoxin and isoleukotoxin to omega-hydroxylated metabolites. Contributes to the degradation of very long-chain fatty acids (VLCFAs) by catalyzing successive omega-oxidations and chain shortening. Plays an important role in vitamin metabolism by chain shortening. Catalyzes omega-hydroxylation of the phytyl chain of tocopherols (forms of vitamin E), with preference for gamma-tocopherols over alpha-tocopherols, thus promoting retention of alpha-tocopherols in tissues. Omega-hydroxylates and inactivates phylloquinone (vitamin K1), and menaquinone-4 (MK-4, a form of vitamin K2), both acting as cofactors in blood coagulation. The protein is Cytochrome P450 4F2 of Homo sapiens (Human).